Reading from the N-terminus, the 343-residue chain is Methionine import ATP-binding protein MetN 3 (343 aa).

Residues 2-241 enclose the ABC transporter domain; the sequence is IELSNITKVF…PKTPLAQKFI (240 aa). Residue 38–45 participates in ATP binding; the sequence is GASGAGKS.

The protein belongs to the ABC transporter superfamily. Methionine importer (TC 3.A.1.24) family. The complex is composed of two ATP-binding proteins (MetN), two transmembrane proteins (MetI) and a solute-binding protein (MetQ).

The protein resides in the cell inner membrane. It catalyses the reaction L-methionine(out) + ATP + H2O = L-methionine(in) + ADP + phosphate + H(+). The catalysed reaction is D-methionine(out) + ATP + H2O = D-methionine(in) + ADP + phosphate + H(+). Its function is as follows. Part of the ABC transporter complex MetNIQ involved in methionine import. Responsible for energy coupling to the transport system. This is Methionine import ATP-binding protein MetN 3 from Pectobacterium atrosepticum (strain SCRI 1043 / ATCC BAA-672) (Erwinia carotovora subsp. atroseptica).